We begin with the raw amino-acid sequence, 352 residues long: Farnesyl pyrophosphate synthase (352 aa).

The isopentenyl diphosphate site is built by Lys52, Arg55, and Gln93. Asp100 and Asp104 together coordinate Mg(2+). Arg109 is a dimethylallyl diphosphate binding site. Position 110 (Arg110) interacts with isopentenyl diphosphate. The dimethylallyl diphosphate site is built by Lys197, Thr198, Gln237, Lys254, and Lys263.

The protein belongs to the FPP/GGPP synthase family. It depends on Mg(2+) as a cofactor.

The enzyme catalyses isopentenyl diphosphate + dimethylallyl diphosphate = (2E)-geranyl diphosphate + diphosphate. The catalysed reaction is isopentenyl diphosphate + (2E)-geranyl diphosphate = (2E,6E)-farnesyl diphosphate + diphosphate. It functions in the pathway isoprenoid biosynthesis; farnesyl diphosphate biosynthesis; farnesyl diphosphate from geranyl diphosphate and isopentenyl diphosphate: step 1/1. It participates in isoprenoid biosynthesis; geranyl diphosphate biosynthesis; geranyl diphosphate from dimethylallyl diphosphate and isopentenyl diphosphate: step 1/1. In terms of biological role, farnesyl pyrophosphate synthase; part of the second module of ergosterol biosynthesis pathway that includes the middle steps of the pathway. ERG20 catalyzes the sequential condensation of isopentenyl pyrophosphate with dimethylallyl pyrophosphate, and then with the resultant geranylpyrophosphate to the ultimate product farnesyl pyrophosphate. The second module is carried out in the vacuole and involves the formation of farnesyl diphosphate, which is also an important intermediate in the biosynthesis of ubiquinone, dolichol, heme and prenylated proteins. Activity by the mevalonate kinase ERG12 first converts mevalonate into 5-phosphomevalonate. 5-phosphomevalonate is then further converted to 5-diphosphomevalonate by the phosphomevalonate kinase ERG8. The diphosphomevalonate decarboxylase MVD1/ERG19 then produces isopentenyl diphosphate. The isopentenyl-diphosphate delta-isomerase IDI1 then catalyzes the 1,3-allylic rearrangement of the homoallylic substrate isopentenyl (IPP) to its highly electrophilic allylic isomer, dimethylallyl diphosphate (DMAPP). Finally the farnesyl diphosphate synthase ERG20 catalyzes the sequential condensation of isopentenyl pyrophosphate with dimethylallyl pyrophosphate, and then with the resultant geranylpyrophosphate to the ultimate product farnesyl pyrophosphate. The protein is Farnesyl pyrophosphate synthase (ERG20) of Saccharomyces cerevisiae (strain ATCC 204508 / S288c) (Baker's yeast).